The sequence spans 59 residues: Large ribosomal subunit protein uL30 (59 aa).

This sequence belongs to the universal ribosomal protein uL30 family. Part of the 50S ribosomal subunit.

This is Large ribosomal subunit protein uL30 from Shewanella amazonensis (strain ATCC BAA-1098 / SB2B).